We begin with the raw amino-acid sequence, 258 residues long: Snake venom serine protease catroxase-2 (258 aa).

The first 18 residues, 1 to 18, serve as a signal peptide directing secretion; the sequence is MVLIRVLANLLILQLSYA. Positions 19-24 are excised as a propeptide; sequence QKSSEL. Residues 25–249 form the Peptidase S1 domain; the sequence is VVGGDECNIN…YNDWIQSIIA (225 aa). 6 disulfides stabilise this stretch: Cys-31/Cys-163, Cys-50/Cys-66, Cys-98/Cys-256, Cys-142/Cys-210, Cys-174/Cys-189, and Cys-200/Cys-225. Asn-44 carries N-linked (GlcNAc...) asparagine glycosylation. Residues His-65 and Asp-110 each act as charge relay system in the active site. Ser-204 serves as the catalytic Charge relay system.

Belongs to the peptidase S1 family. Snake venom subfamily. Monomer. Expressed by the venom gland.

The protein localises to the secreted. Its function is as follows. Snake venom serine protease that may act in the hemostasis system of the prey. The polypeptide is Snake venom serine protease catroxase-2 (Crotalus atrox (Western diamondback rattlesnake)).